A 672-amino-acid polypeptide reads, in one-letter code: Flap endonuclease 1 (672 aa).

The N-domain stretch occupies residues 1–106; it reads MGIKGLIGFL…QTLAKRKLLR (106 aa). Asp34 serves as a coordination point for Mg(2+). Residues Arg47 and Arg72 each contribute to the DNA site. Mg(2+)-binding residues include Asp88, Glu160, Glu162, Asp181, and Asp183. The tract at residues 124 to 252 is I-domain; sequence AIRKYVGRTV…KTAYNLIKKH (129 aa). Glu160 serves as a coordination point for DNA. Residues Gly230 and Asp232 each contribute to the DNA site. Asp232 is a binding site for Mg(2+). Residues 327–335 form an interaction with PCNA region; it reads TQLSLKSFF. A disordered region spans residues 361–436; that stretch reads VESAVDSTSD…DAKKRNKRVP (76 aa). Residues 370-382 are compositionally biased toward basic and acidic residues; the sequence is DDGKDEVPSDDKV.

It belongs to the XPG/RAD2 endonuclease family. FEN1 subfamily. Interacts with PCNA. Three molecules of FEN1 bind to one PCNA trimer with each molecule binding to one PCNA monomer. PCNA stimulates the nuclease activity without altering cleavage specificity. It depends on Mg(2+) as a cofactor. Post-translationally, phosphorylated. Phosphorylation upon DNA damage induces relocalization to the nuclear plasma.

The protein resides in the nucleus. It is found in the nucleolus. The protein localises to the nucleoplasm. It localises to the mitochondrion. Functionally, structure-specific nuclease with 5'-flap endonuclease and 5'-3' exonuclease activities involved in DNA replication and repair. During DNA replication, cleaves the 5'-overhanging flap structure that is generated by displacement synthesis when DNA polymerase encounters the 5'-end of a downstream Okazaki fragment. It enters the flap from the 5'-end and then tracks to cleave the flap base, leaving a nick for ligation. Also involved in the long patch base excision repair (LP-BER) pathway, by cleaving within the apurinic/apyrimidinic (AP) site-terminated flap. Acts as a genome stabilization factor that prevents flaps from equilibrating into structures that lead to duplications and deletions. Also possesses 5'-3' exonuclease activity on nicked or gapped double-stranded DNA, and exhibits RNase H activity. Also involved in replication and repair of rDNA and in repairing mitochondrial DNA. In Babesia bovis, this protein is Flap endonuclease 1.